Here is a 686-residue protein sequence, read N- to C-terminus: XK-related protein 5 (686 aa).

5 helical membrane passes run 33 to 53 (LLWG…QALS), 205 to 225 (HFWV…WLVA), 239 to 259 (LFNL…WDSP), 265 to 285 (VTFY…ATDF), and 297 to 317 (IAGV…YYSL). Disordered stretches follow at residues 340–362 (DKTE…ESSG), 444–470 (LQRK…NSSA), and 490–589 (FASD…VGLA). 2 stretches are compositionally biased toward polar residues: residues 455–470 (LPSS…NSSA) and 490–509 (FASD…TQGE). Gly residues predominate over residues 523 to 536 (QGKGTGGQQRGGEG). The segment covering 550-567 (VATSSQQEGSPATLQTAH) has biased composition (polar residues).

The protein belongs to the XK family.

It localises to the cell membrane. The protein is XK-related protein 5 of Pan troglodytes (Chimpanzee).